Consider the following 133-residue polypeptide: Protein PROTON GRADIENT REGULATION 5, chloroplastic (133 aa).

The transit peptide at 1-60 (MAAASISAIGCNQTLIGTSFYGGWGSSISGEDYQTMLSKTVAPPQQARVSRKAIRAVPMM) directs the protein to the chloroplast.

Belongs to the PGR5 family. Interacts with PGRL1A and PGRL1B. In terms of processing, disulfide bonds; Cys-11 and Cys-105 are probably involved in the formation of disulfide bridges with 'Cys-300' and 'Cys-303' of PGRL1A. 'Cys-272' and 'Cys-275' of PGRL1A may also be used to form the disulfide bridges, but in this case the cyclic electron flow is lost.

The protein localises to the plastid. It is found in the chloroplast thylakoid membrane. Critical for growth under fluctuating-light conditions. Involved in the regulation of the cyclic electron flow (CEF) around Photosystem I. Essential for the reduction of PGRL1A by ferredoxin and for photoprotection. Contributes to maximize photosynthesis efficiency after a long dark adaptation via the regulation of non-photochemical quenching (NPQ); acts independently from DLDG1. Promotes the induction of steady-state proton motive force (pmf) and energy-dependent quenching (qE). This chain is Protein PROTON GRADIENT REGULATION 5, chloroplastic, found in Arabidopsis thaliana (Mouse-ear cress).